Here is a 149-residue protein sequence, read N- to C-terminus: Transcriptional repressor NrdR (149 aa).

A zinc finger spans residues 3 to 34 (CPFCQSDDTKVLDTRLIDDGSQVRRRRECVSC). Residues 49–139 (PHLIKSDDSR…VYRQFQDIEA (91 aa)) form the ATP-cone domain.

It belongs to the NrdR family. It depends on Zn(2+) as a cofactor.

In terms of biological role, negatively regulates transcription of bacterial ribonucleotide reductase nrd genes and operons by binding to NrdR-boxes. The chain is Transcriptional repressor NrdR from Ruthia magnifica subsp. Calyptogena magnifica.